Consider the following 650-residue polypeptide: Threonine--tRNA ligase (650 aa).

A TGS domain is found at 3 to 65; the sequence is DLVKVTLPDG…DRDARLEIVT (63 aa). Residues 248–548 are catalytic; it reads DHRRLGPQLG…LTEHYAGAFP (301 aa). The Zn(2+) site is built by C349, H400, and H525.

It belongs to the class-II aminoacyl-tRNA synthetase family. Homodimer. The cofactor is Zn(2+).

The protein resides in the cytoplasm. It carries out the reaction tRNA(Thr) + L-threonine + ATP = L-threonyl-tRNA(Thr) + AMP + diphosphate + H(+). Catalyzes the attachment of threonine to tRNA(Thr) in a two-step reaction: L-threonine is first activated by ATP to form Thr-AMP and then transferred to the acceptor end of tRNA(Thr). Also edits incorrectly charged L-seryl-tRNA(Thr). This Anaeromyxobacter dehalogenans (strain 2CP-C) protein is Threonine--tRNA ligase.